The chain runs to 95 residues: UPF0358 protein BCG9842_B1188 (95 aa).

It belongs to the UPF0358 family.

This Bacillus cereus (strain G9842) protein is UPF0358 protein BCG9842_B1188.